The following is a 517-amino-acid chain: MSTLANLTEVLFRLDFDPDTAVYHYRGQTLSRLQCRTYILSQASQLARLLKPGDRVVLALNDSPSLACLFLACIAVGAIPAVINPKSREQALADIAADCQASLVVREADAPSLSGPLAPLTLRAAAGRPLLDDFSLDALVGPADLDWSAFHRQDPAAACFLQYTSGSTGAPKGVMHSLRNTLGFCRAFATELLALQAGDRLYSIPKMFFGYGMGNSLFFPWFSGASALLDDTWPSPERVLENLVAFRPRVLFGVPAIYASLRPQARELLSSVRLAFSAGSPLPRGEFEFWAAHGLEICDGIGATEVGHVFLANRPGQARADSTGLPLPGYECRLVDREGHTIEEAGRQGVLLVRGPGLSPGYWRASEEQQARFAGGWYRTGDLFERDESGAYRHCGREDDLFKVNGRWVVPTQVEQAICRHLPEVSEAVLVPTCRLHDGLRPTLFVTLATPLDDNQILLAQRIDQHLAEQIPSHMLPSQLHVLPALPRNDNGKLARAELRHLADTLYHDNLPEERAC.

Position 161-172 (161-172 (LQYTSGSTGAPK)) interacts with AMP.

Belongs to the ATP-dependent AMP-binding enzyme family. Monomer.

The catalysed reaction is anthranilate + ATP + CoA = anthraniloyl-CoA + AMP + diphosphate. Catalyzes the formation of anthraniloyl-CoA, which is the priming step for entry into the Pseudomonas quinolone signal (PQS) biosynthetic pathway. Also active on a variety of aromatic substrates, including benzoate and chloro and fluoro derivatives of anthranilate. The protein is Anthranilate--CoA ligase (pqsA) of Pseudomonas aeruginosa (strain ATCC 15692 / DSM 22644 / CIP 104116 / JCM 14847 / LMG 12228 / 1C / PRS 101 / PAO1).